The sequence spans 638 residues: Chaperone protein HtpG (638 aa).

Residues 1–328 (MGDVEELKFS…SSDLPLNISR (328 aa)) form an a; substrate-binding region. Residues 329-558 (ETLQNNMVIE…EHALDIRMER (230 aa)) form a b region. The tract at residues 484–508 (LEKFTEGDDQQSTKKKKEKKDTDDA) is disordered. Residues 559–638 (FLREQKQLSY…NQVLARLFKK (80 aa)) are c.

It belongs to the heat shock protein 90 family. Homodimer.

Its subcellular location is the cytoplasm. Molecular chaperone. Has ATPase activity. The chain is Chaperone protein HtpG from Anaplasma marginale (strain St. Maries).